We begin with the raw amino-acid sequence, 256 residues long: Probable transcriptional regulatory protein cce_0894 (256 aa).

It belongs to the TACO1 family.

The protein resides in the cytoplasm. This Crocosphaera subtropica (strain ATCC 51142 / BH68) (Cyanothece sp. (strain ATCC 51142)) protein is Probable transcriptional regulatory protein cce_0894.